A 542-amino-acid polypeptide reads, in one-letter code: Phenylacetone monooxygenase (542 aa).

FAD-binding positions include Ser27, Glu46, 54–57 (VWYW), Asp66, Tyr72, Val119, and Gln152. 64-66 (RCD) is a binding site for NADP(+). NADP(+) is bound by residues 194-200 (TGSSGIQ), 217-218 (RT), and 336-337 (KR). Met446 provides a ligand contact to FAD. Trp501 contacts NADP(+).

Belongs to the FAD-binding monooxygenase family. As to quaternary structure, monomer. It depends on FAD as a cofactor.

It catalyses the reaction phenylacetone + NADPH + O2 + H(+) = benzyl acetate + NADP(+) + H2O. Functionally, catalyzes a Baeyer-Villiger oxidation reaction, i.e. the insertion of an oxygen atom into a carbon-carbon bond adjacent to a carbonyl, which converts ketones to esters. Is most efficient with phenylacetone as substrate, leading to the formation of benzyl acetate. Can also oxidize other aromatic ketones (benzylacetone, alpha-methylphenylacetone and 4-hydroxyacetophenone), some aliphatic ketones (dodecan-2-one and bicyclohept-2-en-6-one) and sulfides (e.g. methyl 4-tolylsulfide). The chain is Phenylacetone monooxygenase (pamO) from Thermobifida fusca (strain YX).